Consider the following 563-residue polypeptide: Beta-catenin-like protein 1 (563 aa).

Residue Met1 is modified to N-acetylmethionine. Residues 1–81 are disordered; that stretch reads MDVGELLSYQ…EEEEPLDESS (81 aa). The Nuclear localization signal motif lies at 16–33; the sequence is KRPRDDEEEELKTRRKQT. Residues 34 to 45 show a composition bias toward basic and acidic residues; that stretch reads GPRERGRYREEE. The span at 66–78 shows a compositional bias: acidic residues; that stretch reads DGEEEEEEEEPLD. 2 HEAT repeats span residues 79-129 and 134-176; these read ESSV…VVAT and YHLL…TLHE. Position 91 is an N6-acetyllysine (Lys91). Positions 130-140 match the Nuclear export signal (NES) motif; it reads MPDLYHLLVEL. ARM repeat units lie at residues 178–228, 229–273, 274–323, 325–363, and 364–417; these read EEGA…MAEF, RPEM…LQDN, DENR…CLML, SNRE…AMIG, and PEGT…LLRN. Ser389 is subject to Phosphoserine. The stretch at 476-540 forms a coiled coil; it reads DMEDEFYLRR…HIIKEYAENI (65 aa). Residue Ser545 is modified to Phosphoserine.

Component of the PRP19-CDC5L splicing complex composed of a core complex comprising a homotetramer of PRPF19, CDC5L, PLRG1 and BCAS2, and at least three less stably associated proteins CTNNBL1, CWC15 and HSPA8. Interacts directly with CWC15 and CDC5L in the complex. Interacts with AICDA; the interaction is important for the antibody diversification activity of AICDA. Interacts with PRPF31 (via its NLS). Interacts (via its N-terminal NLS) with KPNA1 and KPNA2.

It is found in the nucleus. Component of the PRP19-CDC5L complex that forms an integral part of the spliceosome and is required for activating pre-mRNA splicing. Participates in AID/AICDA-mediated somatic hypermutation (SHM) and class-switch recombination (CSR), 2 processes resulting in the production of high-affinity, mutated isotype-switched antibodies. This is Beta-catenin-like protein 1 (Ctnnbl1) from Mus musculus (Mouse).